Consider the following 238-residue polypeptide: tRNA (guanine-N(7)-)-methyltransferase (238 aa).

Glutamate 68, glutamate 93, aspartate 120, and aspartate 143 together coordinate S-adenosyl-L-methionine. Aspartate 143 is a catalytic residue. Residues lysine 147, aspartate 179, and 216-219 (TKFE) contribute to the substrate site.

The protein belongs to the class I-like SAM-binding methyltransferase superfamily. TrmB family.

The enzyme catalyses guanosine(46) in tRNA + S-adenosyl-L-methionine = N(7)-methylguanosine(46) in tRNA + S-adenosyl-L-homocysteine. The protein operates within tRNA modification; N(7)-methylguanine-tRNA biosynthesis. Functionally, catalyzes the formation of N(7)-methylguanine at position 46 (m7G46) in tRNA. This chain is tRNA (guanine-N(7)-)-methyltransferase, found in Shewanella sp. (strain W3-18-1).